The sequence spans 530 residues: Membrane-associated transporter protein (530 aa).

Over 1 to 46 the chain is Cytoplasmic; the sequence is MGSNSGQAGRHIYKSLADDGPFDSVEPPKRPTSRLIMHSMAMFGRE. A helical transmembrane segment spans residues 47–67; sequence FCYAVEAAYVTPVLLSVGLPS. Residue serine 68 is a topological domain, extracellular. The chain crosses the membrane as a helical span at residues 69–89; that stretch reads LYSIVWFLSPILGFLLQPVVG. The Cytoplasmic segment spans residues 90 to 110; the sequence is SASDHCRSRWGRRRPYILTLG. Residues 111–131 form a helical membrane-spanning segment; it reads VMMLVGMALYLNGATVVAALI. The Extracellular segment spans residues 132 to 138; the sequence is ANPRRKL. The chain crosses the membrane as a helical span at residues 139 to 159; it reads VWAISVTMIGVVLFDFAADFI. Residues 160–184 lie on the Cytoplasmic side of the membrane; that stretch reads DGPIKAYLFDVCSHQDKEKGLHYHA. A helical membrane pass occupies residues 185 to 205; it reads LFTGFGGALGYLLGAIDWAHL. The Extracellular segment spans residues 206 to 216; sequence ELGRLLGTEFQ. Residues 217–237 form a helical membrane-spanning segment; that stretch reads VMFFFSALVLTLCFTVHLCSI. Residues 238–318 lie on the Cytoplasmic side of the membrane; that stretch reads SEAPLTEVAK…ALVNMPPHYR (81 aa). Residues 319–339 traverse the membrane as a helical segment; that stretch reads YLCISHLIGWTAFLSNMLFFT. The Extracellular portion of the chain corresponds to 340 to 366; that stretch reads DFMGQIVYRGDPYSAHNSTEFLIYERG. Asparagine 356 carries an N-linked (GlcNAc...) asparagine glycan. The helical transmembrane segment at 367 to 387 threads the bilayer; the sequence is VEVGCWGLCINSVFSSLYSYF. The Cytoplasmic segment spans residues 388–398; the sequence is QKVLVSYIGLK. A helical membrane pass occupies residues 399–419; it reads GLYFTGYLLFGLGTGFIGLFP. Residues 420-425 lie on the Extracellular side of the membrane; it reads NVYSTL. The chain crosses the membrane as a helical span at residues 426 to 446; sequence VLCSLFGVMSSTLYTVPFNLI. Over 447-477 the chain is Cytoplasmic; that stretch reads TEYHREEEKERQQAPGGDPDNSVRGKGMDCA. The chain crosses the membrane as a helical span at residues 478-498; it reads TLTCMVQLAQILVGGGLGFLV. Residues 499 to 504 are Extracellular-facing; sequence NTAGTV. A helical transmembrane segment spans residues 505-525; it reads VVVVITASAVALIGCCFVALF. Residues 526–530 lie on the Cytoplasmic side of the membrane; it reads VRYVD.

The protein belongs to the glycoside-pentoside-hexuronide (GPH) cation symporter transporter (TC 2.A.2) family. Interacts with TYRP1. Expressed in mature melanocytes.

Its subcellular location is the melanosome membrane. The enzyme catalyses sucrose(out) + H(+)(out) = sucrose(in) + H(+)(in). It catalyses the reaction D-glucose(out) + H(+)(out) = D-glucose(in) + H(+)(in). In terms of biological role, proton-associated glucose and sucrose transporter. May be able to transport also fructose. Expressed at a late melanosome maturation stage where functions as proton/glucose exporter which increase lumenal pH by decreasing glycolysis. Regulates melanogenesis by maintaining melanosome neutralization that is initially initiated by transient OCA2 and required for a proper function of the tyrosinase TYR. The chain is Membrane-associated transporter protein from Homo sapiens (Human).